The following is a 331-amino-acid chain: MKFQSTLLLAAAAGSALAVPHGSGHKKRASVFEWFGSNESGAEFGTNIPGVWGTDYIFPDPSTISTLIGKGMNFFRVQFMMERLLPDSMTGSYDEEYLANLTTVVKAVTDGGAHALIDPHNYGRYNGEIISSTSDFQTFWQNLAGQYKDNDLVMFDTNNEYYDMDQDLVLNLNQAAINGIRAAGASQYIFVEGNSWTGAWTWVDVNDNMKNLTDPEDKIVYEMHQYLDSDGSGTSETCVSGTIGKERITDATQWLKDNKKVGFIGEYAGGSNDVCRSAVSGMLEYMANNTDVWKGASWWAAGPWWGDYIFSLEPPDGTAYTGMLDILETYL.

An N-terminal signal peptide occupies residues 1-18 (MKFQSTLLLAAAAGSALA). N-linked (GlcNAc...) asparagine glycosylation is found at asparagine 38 and asparagine 100. Residue glutamate 160 is the Proton donor of the active site. The N-linked (GlcNAc...) asparagine glycan is linked to asparagine 211. The Nucleophile role is filled by glutamate 266. Asparagine 288 carries an N-linked (GlcNAc...) asparagine glycan.

It belongs to the glycosyl hydrolase 5 (cellulase A) family.

It is found in the secreted. It catalyses the reaction Endohydrolysis of (1-&gt;4)-beta-D-glucosidic linkages in cellulose, lichenin and cereal beta-D-glucans.. Functionally, has endoglucanase activity on substrates containing beta-1,4 glycosidic bonds, like in carboxymethylcellulose (CMC), hydroxyethylcellulose (HEC) and beta-glucan. Involved in the degradation of complex natural cellulosic substrates. The protein is Probable endo-beta-1,4-glucanase B (eglB) of Aspergillus niger (strain ATCC MYA-4892 / CBS 513.88 / FGSC A1513).